The following is a 153-amino-acid chain: 3-hydroxyacyl-[acyl-carrier-protein] dehydratase FabZ (153 aa).

His-57 is an active-site residue.

The protein belongs to the thioester dehydratase family. FabZ subfamily.

It localises to the cytoplasm. It catalyses the reaction a (3R)-hydroxyacyl-[ACP] = a (2E)-enoyl-[ACP] + H2O. Functionally, involved in unsaturated fatty acids biosynthesis. Catalyzes the dehydration of short chain beta-hydroxyacyl-ACPs and long chain saturated and unsaturated beta-hydroxyacyl-ACPs. This is 3-hydroxyacyl-[acyl-carrier-protein] dehydratase FabZ from Vibrio cholerae serotype O1 (strain ATCC 39315 / El Tor Inaba N16961).